Reading from the N-terminus, the 219-residue chain is Flagellar transcriptional regulator FlhC (219 aa).

Zn(2+) contacts are provided by Cys-137, Cys-140, Cys-157, and Cys-160.

Belongs to the FlhC family. In terms of assembly, heterohexamer composed of two FlhC and four FlhD subunits. Each FlhC binds a FlhD dimer, forming a heterotrimer, and a hexamer assembles by dimerization of two heterotrimers. The cofactor is Zn(2+).

It localises to the cytoplasm. Functions in complex with FlhD as a master transcriptional regulator that regulates transcription of several flagellar and non-flagellar operons by binding to their promoter region. Activates expression of class 2 flagellar genes, including fliA, which is a flagellum-specific sigma factor that turns on the class 3 genes. Also regulates genes whose products function in a variety of physiological pathways. The protein is Flagellar transcriptional regulator FlhC of Paraburkholderia phymatum (strain DSM 17167 / CIP 108236 / LMG 21445 / STM815) (Burkholderia phymatum).